Reading from the N-terminus, the 135-residue chain is Ribosome-binding factor A (135 aa).

Belongs to the RbfA family. In terms of assembly, monomer. Binds 30S ribosomal subunits, but not 50S ribosomal subunits or 70S ribosomes.

The protein localises to the cytoplasm. Functionally, one of several proteins that assist in the late maturation steps of the functional core of the 30S ribosomal subunit. Associates with free 30S ribosomal subunits (but not with 30S subunits that are part of 70S ribosomes or polysomes). Required for efficient processing of 16S rRNA. May interact with the 5'-terminal helix region of 16S rRNA. This chain is Ribosome-binding factor A, found in Dinoroseobacter shibae (strain DSM 16493 / NCIMB 14021 / DFL 12).